The chain runs to 372 residues: Cytochrome b (372 aa).

The next 4 membrane-spanning stretches (helical) occupy residues 25–45 (FGSM…FLAI), 69–90 (WCLQ…YIHI), 105–125 (WMSG…GYVL), and 170–190 (FFAL…IHII). His75 and His89 together coordinate heme b. Residues His174 and His188 each contribute to the heme b site. His193 is an a ubiquinone binding site. The next 4 membrane-spanning stretches (helical) occupy residues 218–238 (YKDL…MSFS), 280–300 (LGGT…PFTH), 312–332 (MAQF…WAAS), and 339–358 (YITI…IINP).

It belongs to the cytochrome b family. As to quaternary structure, the cytochrome bc1 complex contains 3 respiratory subunits (MT-CYB, CYC1 and UQCRFS1), 2 core proteins (UQCRC1 and UQCRC2) and probably 6 low-molecular weight proteins. Requires heme b as cofactor.

The protein resides in the mitochondrion inner membrane. Component of the ubiquinol-cytochrome c reductase complex (complex III or cytochrome b-c1 complex) that is part of the mitochondrial respiratory chain. The b-c1 complex mediates electron transfer from ubiquinol to cytochrome c. Contributes to the generation of a proton gradient across the mitochondrial membrane that is then used for ATP synthesis. This is Cytochrome b (MT-CYB) from Acrochordus granulatus (Rasp-skinned water snake).